The following is a 20-amino-acid chain: Putative phosphoglycerate kinase (20 aa).

It belongs to the phosphoglycerate kinase family. As to quaternary structure, monomer.

The protein resides in the cytoplasm. It catalyses the reaction (2R)-3-phosphoglycerate + ATP = (2R)-3-phospho-glyceroyl phosphate + ADP. The protein operates within carbohydrate degradation; glycolysis; pyruvate from D-glyceraldehyde 3-phosphate: step 2/5. This is Putative phosphoglycerate kinase (pgk) from Clostridium pasteurianum.